The chain runs to 122 residues: Large ribosomal subunit protein bL12 (122 aa).

This sequence belongs to the bacterial ribosomal protein bL12 family. As to quaternary structure, homodimer. Part of the ribosomal stalk of the 50S ribosomal subunit. Forms a multimeric L10(L12)X complex, where L10 forms an elongated spine to which 2 to 4 L12 dimers bind in a sequential fashion. Binds GTP-bound translation factors.

Forms part of the ribosomal stalk which helps the ribosome interact with GTP-bound translation factors. Is thus essential for accurate translation. The chain is Large ribosomal subunit protein bL12 from Staphylococcus aureus (strain Newman).